The chain runs to 44 residues: Photosystem I reaction center subunit IX (44 aa).

A helical transmembrane segment spans residues 7–27; it reads YLSTVPVLTTLWFGSLAGLLI.

This sequence belongs to the PsaJ family.

It is found in the plastid. The protein resides in the chloroplast thylakoid membrane. Its function is as follows. May help in the organization of the PsaE and PsaF subunits. This chain is Photosystem I reaction center subunit IX, found in Dioscorea elephantipes (Elephant's foot yam).